The sequence spans 472 residues: Coenzyme F(430) synthetase (472 aa).

119–125 (GVKAKTS) contacts ATP.

It belongs to the MurCDEF family.

It carries out the reaction 15,17(3)-seco-F430-17(3)-acid + ATP = coenzyme F430 + ADP + phosphate. Involved in the biosynthesis of the unique nickel-containing tetrapyrrole coenzyme F430, the prosthetic group of methyl-coenzyme M reductase (MCR), which plays a key role in methanogenesis and anaerobic methane oxidation. Catalyzes the activation the g-propionate side chain of 15,17(3)-seco-F430-17(3)-acid (seco-F430) for intramolecular C-C bond formation to yield the carbocyclic F ring of coenzyme F430. The chain is Coenzyme F(430) synthetase from Methanosarcina acetivorans (strain ATCC 35395 / DSM 2834 / JCM 12185 / C2A).